Reading from the N-terminus, the 81-residue chain is MSHTVKIYDTCIGCTQCVRACPTDVLEMVPWDGCKASQIASAPRTEDCVGCKRCESACPTDFLSVRVYLGSETTRSMGLAY.

4Fe-4S ferredoxin-type domains lie at 2–31 (SHTVKIYDTCIGCTQCVRACPTDVLEMVPW) and 39–68 (IASAPRTEDCVGCKRCESACPTDFLSVRVY). The [4Fe-4S] cluster site is built by Cys-11, Cys-14, Cys-17, Cys-21, Cys-48, Cys-51, Cys-54, and Cys-58.

The eukaryotic PSI reaction center is composed of at least 11 subunits. The cofactor is [4Fe-4S] cluster.

The protein localises to the plastid. The protein resides in the chloroplast thylakoid membrane. It catalyses the reaction reduced [plastocyanin] + hnu + oxidized [2Fe-2S]-[ferredoxin] = oxidized [plastocyanin] + reduced [2Fe-2S]-[ferredoxin]. In terms of biological role, apoprotein for the two 4Fe-4S centers FA and FB of photosystem I (PSI); essential for photochemical activity. FB is the terminal electron acceptor of PSI, donating electrons to ferredoxin. The C-terminus interacts with PsaA/B/D and helps assemble the protein into the PSI complex. Required for binding of PsaD and PsaE to PSI. PSI is a plastocyanin/cytochrome c6-ferredoxin oxidoreductase, converting photonic excitation into a charge separation, which transfers an electron from the donor P700 chlorophyll pair to the spectroscopically characterized acceptors A0, A1, FX, FA and FB in turn. This Chlorella vulgaris (Green alga) protein is Photosystem I iron-sulfur center.